A 576-amino-acid polypeptide reads, in one-letter code: Sulfite reductase [NADPH] hemoprotein beta-component (576 aa).

Residues Cys435, Cys441, Cys480, and Cys484 each coordinate [4Fe-4S] cluster. Cys484 is a siroheme binding site.

Belongs to the nitrite and sulfite reductase 4Fe-4S domain family. As to quaternary structure, alpha(8)-beta(8). The alpha component is a flavoprotein, the beta component is a hemoprotein. The cofactor is siroheme. [4Fe-4S] cluster is required as a cofactor.

It carries out the reaction hydrogen sulfide + 3 NADP(+) + 3 H2O = sulfite + 3 NADPH + 4 H(+). It participates in sulfur metabolism; hydrogen sulfide biosynthesis; hydrogen sulfide from sulfite (NADPH route): step 1/1. Component of the sulfite reductase complex that catalyzes the 6-electron reduction of sulfite to sulfide. This is one of several activities required for the biosynthesis of L-cysteine from sulfate. This is Sulfite reductase [NADPH] hemoprotein beta-component from Yersinia pestis bv. Antiqua (strain Antiqua).